The following is a 151-amino-acid chain: FIS1-related protein fis-2 (151 aa).

A helical transmembrane segment spans residues 126–146 (LIGAAIVGGGALALAGLVAIF).

The protein belongs to the FIS1 family.

The protein localises to the mitochondrion outer membrane. It is found in the peroxisome membrane. It localises to the mitochondrion. Functionally, involved in the fragmentation of the mitochondrial network. Involved in perinuclear clustering of the mitochondrial network. May act, redundantly with fis-1, downstream of mitochondrial fission, before the fission products participate in mitochondrial homeostasis, mitophagy, or apoptosis. Plays a role in apoptosis by promoting mitochondrial elimination and cell-death execution, acting downstream of caspase ced-3, and perhaps independently of dynamin GTPase drp-1, caspase ced-9 and apoptosis-inducing factor AIFM/wah-1. The sequence is that of FIS1-related protein fis-2 from Caenorhabditis elegans.